The following is a 199-amino-acid chain: Pre-histone-like nucleoprotein (199 aa).

Position 2 is an N-acetylserine; by host (serine 2). Residues 2 to 23 (SILISPSDNTGWGLGTGKMYGG) constitute a propeptide that is removed on maturation. Lysine 26 carries the N6-acetyllysine; by host modification. Positions 189 to 199 (RRKASVRRRRT) match the Nuclear localization signal motif.

The protein belongs to the adenoviridae histone-like nucleoprotein family. In terms of assembly, interacts with the core-capsid bridging protein; this interaction bridges the virus core to the capsid. Interacts with host NPM1; this interaction might play a role in placing the pre-histone-like nucleoprotein on the viral DNA or regulating viral gene expression. Interacts with host HMGB1; this interaction inhibits host immune response. Post-translationally, cleaved near the N-terminus by the viral protease during virion maturation to form the mature protein.

Its subcellular location is the virion. The protein localises to the host nucleus. It localises to the host nucleolus. Functionally, plays a role in the inhibition of host immune response within the nucleus. Interacts with cellular nucleosomes and immobilizes the host immune danger signal HMGB1 on chromatin. In turn, prevents HMGB1 release out of the cell and thus decreases inflammation. Also plays a role in the wrapping and condensation of the viral DNA. May also promote viral genome import into the nucleus. The chain is Pre-histone-like nucleoprotein from Murine adenovirus A serotype 1 (MAdV-1).